We begin with the raw amino-acid sequence, 122 residues long: Holo-[acyl-carrier-protein] synthase (122 aa).

Mg(2+) is bound by residues Asp9 and Glu58.

The protein belongs to the P-Pant transferase superfamily. AcpS family. The cofactor is Mg(2+).

It localises to the cytoplasm. It catalyses the reaction apo-[ACP] + CoA = holo-[ACP] + adenosine 3',5'-bisphosphate + H(+). Functionally, transfers the 4'-phosphopantetheine moiety from coenzyme A to a Ser of acyl-carrier-protein. This chain is Holo-[acyl-carrier-protein] synthase, found in Chlamydia caviae (strain ATCC VR-813 / DSM 19441 / 03DC25 / GPIC) (Chlamydophila caviae).